Reading from the N-terminus, the 222-residue chain is Disulfide bond formation protein D (222 aa).

Positions 1–36 are cleaved as a signal peptide; it reads MKKKQQSSAKFAVILTVVVVVLLAAIVIINNKTEQG. Residues 37-220 enclose the Thioredoxin domain; the sequence is NDAVSGQPSI…IKETIEKELK (184 aa). Cysteines 69 and 72 form a disulfide.

The protein belongs to the thioredoxin family. DsbA subfamily.

The protein localises to the cell membrane. The protein resides in the membrane raft. Required for the stabilization, possibly via formation of a disulfide bond, of the obligatory competence protein ComGC. May be required for the stability of secreted proteins with disulfide bonds. Not required for sporulation. The sequence is that of Disulfide bond formation protein D (bdbD) from Bacillus subtilis (strain 168).